The following is a 365-amino-acid chain: Putative chalcone synthase (365 aa).

The active site involves cysteine 144.

This sequence belongs to the thiolase-like superfamily. Chalcone/stilbene synthases family.

It catalyses the reaction (E)-4-coumaroyl-CoA + 3 malonyl-CoA + 3 H(+) = 2',4,4',6'-tetrahydroxychalcone + 3 CO2 + 4 CoA. The protein is Putative chalcone synthase (bcsA) of Bacillus subtilis (strain 168).